Consider the following 118-residue polypeptide: Urease subunit beta (118 aa).

This sequence belongs to the urease beta subunit family. Heterotrimer of UreA (gamma), UreB (beta) and UreC (alpha) subunits. Three heterotrimers associate to form the active enzyme.

Its subcellular location is the cytoplasm. It catalyses the reaction urea + 2 H2O + H(+) = hydrogencarbonate + 2 NH4(+). It functions in the pathway nitrogen metabolism; urea degradation; CO(2) and NH(3) from urea (urease route): step 1/1. This chain is Urease subunit beta, found in Aliivibrio fischeri (strain MJ11) (Vibrio fischeri).